A 119-amino-acid chain; its full sequence is MERLQSHRDFVTVLKRRRKAGGKDIVVHYLVPDDHHDDDDRTVHRRLGLAVSKSVGHAVTRNTVKRRFRVLARAHEDLLPAHCDIVLRAKPSAATASFASLDQQIAKAFATVAHKVAEA.

Belongs to the RnpA family. Consists of a catalytic RNA component (M1 or rnpB) and a protein subunit.

The catalysed reaction is Endonucleolytic cleavage of RNA, removing 5'-extranucleotides from tRNA precursor.. Its function is as follows. RNaseP catalyzes the removal of the 5'-leader sequence from pre-tRNA to produce the mature 5'-terminus. It can also cleave other RNA substrates such as 4.5S RNA. The protein component plays an auxiliary but essential role in vivo by binding to the 5'-leader sequence and broadening the substrate specificity of the ribozyme. This is Ribonuclease P protein component from Bifidobacterium longum (strain DJO10A).